A 361-amino-acid chain; its full sequence is Septin-1 (361 aa).

Positions lysine 32 to lysine 304 constitute a Septin-type G domain. The tract at residues glycine 42 to serine 49 is G1 motif. Residues glycine 42 to serine 49, threonine 76, glycine 102, lysine 181 to glutamate 189, glycine 239, and arginine 254 contribute to the GTP site. The interval aspartate 99–glycine 102 is G3 motif. The tract at residues alanine 180–aspartate 183 is G4 motif. The residue at position 319 (serine 319) is a Phosphoserine.

The protein belongs to the TRAFAC class TrmE-Era-EngA-EngB-Septin-like GTPase superfamily. Septin GTPase family. Likely part of a multicomponent septin complex that includes pnut. Interacts with pnut. Interacts with park. In terms of processing, ubiquitinated by park, leading to its degradation by the proteasome. Accumulates at the leading edge of the cleavage furrow in dividing cells and cellularizing embryos (at protein level). Also accumulates at the leading edge of the embryo epithelium during dorsal closure, in the embryonic neurons, and at the baso-lateral surfaces of ovarian follicle cells (at protein level).

The protein localises to the cytoplasm. Its function is as follows. Involved in cytokinesis. May be involved in p53-dependent apoptosis. In Drosophila melanogaster (Fruit fly), this protein is Septin-1.